We begin with the raw amino-acid sequence, 339 residues long: D-alanine--D-alanine ligase (339 aa).

The region spanning Lys126 to Glu333 is the ATP-grasp domain. Residue Ala158–Glu213 coordinates ATP. Asp286, Glu300, and Asn302 together coordinate Mg(2+).

This sequence belongs to the D-alanine--D-alanine ligase family. Mg(2+) is required as a cofactor. Requires Mn(2+) as cofactor.

The protein resides in the cytoplasm. It carries out the reaction 2 D-alanine + ATP = D-alanyl-D-alanine + ADP + phosphate + H(+). It functions in the pathway cell wall biogenesis; peptidoglycan biosynthesis. Its function is as follows. Cell wall formation. The protein is D-alanine--D-alanine ligase of Deinococcus geothermalis (strain DSM 11300 / CIP 105573 / AG-3a).